Reading from the N-terminus, the 1342-residue chain is MVYSYTEKKRIRKDFGKRPQVLDIPYLLSIQLDSFQKFIEQDPEGQHGLEAAFRSVFPIQSYSGNSELQYVSYRLGEPVFDVKECQIRGVTYSAPLRVKLRLVIYEREAPEGTVKDIKEQEVYMGEIPLMTENGTFVINGTERVIVSQLHRSPGVFFDSDKGKTHSSGKVLYNARIIPYRGSWLDFEFDPKDNLFVRIDRRRKLPATIILRALNFTTAQILDLFFEKVVFEIRDNKLQMELVPERLRGETASFDIEANGKVYVEKARRITARHIRQLEKDGIDRIEVPVEYIAGKVVAKDYVDASTGELICAANMELSLDLLAKLSQAGHKQIETLFTNDLDHGAYISETLRVDPTSDRLSALVEIYRMMRPGEPPTREAAENLFENLFFSEDRYDLSAVGRMKFNRSLLRDEIEGSGILSKEDITEVMKKLIDIRNGRGEVDDIDHLGNRRIRSVGEMAENQFRVGLVRVERAVKERLSLGDLDTLMPQDMINAKPISAAVKEFFGSSQLSQFMDQNNPLSEITHKRRISALGPGGLTRERAGFEVRDVHPTHYGRVCPIETPEGPNIGLINSLSVYAQTNEYGFLETPYRRVRDGVVTDEINYLSAIEEGNFVIAQANSNLDDEGRFLEDLVTCRSKGESSLFSREQVDYMDVSTQQIVSVGASLIPFLEHDDANRALMGANMQRQAVPTLRADKPLVGTGMERAVAVDSGVTSVAKRGGTVQYVDASRIVIKVNEDEMHPGEAGIDIYNLTKYTRSNQNTCINQMPCVNLGEPIERGDVLADGPSTDLGELALGQNMRVAFMPWNGYNFEDSILVSERVVQEDRFTTIHIQELACVSRDTKLGPEEITADIPNVGEAALSKLDESGIVYIGAEVTGGDILVGKVTPKGETQLTPEEKLLRAIFGEKASDVKDSSLRVPNGVSGTVIDVQVFTRDGVEKDKRALEIEEMQLKQAKKDLTEELQILEAGLFARIHAVLVSGGIEAEKLSKLPRERWLELGLTDEDKQNQLEQLAEQYDEMKSEFEKKMDAKRRKITQGDDLAPGVLKIVKVYLAVKRQIQPGDKMAGRHGNKGVISKINPIEDMPYDENGTPVDIVLNPLGVPSRMNIGQILETHLGMAAKGIGEKINAMLKKQEEVAKLREFIQKAYDLGDNVCQKVDLSTFTDDEVLRLAENLKKGMPIATPVFDGATEKEIKELLQLGGLPTSGQITLFDGRTGEQFERQVTVGYMYMLKLNHLVDDKMHARSTGSYSLVTQQPLGGKAQFGGQRFGEMEVWALEAYGAAYTLQEMLTVKSDDVNGRTKMYKNIVDGDHRMEPGMPESFNVLLKEIRSLGINIELEEE.

The protein belongs to the RNA polymerase beta chain family. As to quaternary structure, the RNAP catalytic core consists of 2 alpha, 1 beta, 1 beta' and 1 omega subunit. When a sigma factor is associated with the core the holoenzyme is formed, which can initiate transcription.

It catalyses the reaction RNA(n) + a ribonucleoside 5'-triphosphate = RNA(n+1) + diphosphate. DNA-dependent RNA polymerase catalyzes the transcription of DNA into RNA using the four ribonucleoside triphosphates as substrates. This Yersinia pseudotuberculosis serotype O:1b (strain IP 31758) protein is DNA-directed RNA polymerase subunit beta.